A 248-amino-acid polypeptide reads, in one-letter code: Probable transcriptional regulatory protein OCAR_7305/OCA5_c08120 (248 aa).

The protein belongs to the TACO1 family.

Its subcellular location is the cytoplasm. The sequence is that of Probable transcriptional regulatory protein OCAR_7305/OCA5_c08120 from Afipia carboxidovorans (strain ATCC 49405 / DSM 1227 / KCTC 32145 / OM5) (Oligotropha carboxidovorans).